Here is a 365-residue protein sequence, read N- to C-terminus: Aminomethyltransferase (365 aa).

The protein belongs to the GcvT family. As to quaternary structure, the glycine cleavage system is composed of four proteins: P, T, L and H.

The catalysed reaction is N(6)-[(R)-S(8)-aminomethyldihydrolipoyl]-L-lysyl-[protein] + (6S)-5,6,7,8-tetrahydrofolate = N(6)-[(R)-dihydrolipoyl]-L-lysyl-[protein] + (6R)-5,10-methylene-5,6,7,8-tetrahydrofolate + NH4(+). Its function is as follows. The glycine cleavage system catalyzes the degradation of glycine. This chain is Aminomethyltransferase, found in Synechococcus sp. (strain CC9902).